Reading from the N-terminus, the 474-residue chain is Alkylcitrate dehydratase phiI (474 aa).

Belongs to the PrpD family. Monomer.

It catalyses the reaction (4E,11E)-2-hydroxytrideca-4,11-dien-1,2,3-tricarboxylate + 2 H(+) = [4-(deca-1,8-diyl)-2,5-dioxo-2,5-dihydro-3-furanyl]acetate + 2 H2O. The protein operates within secondary metabolite biosynthesis. Functionally, alkylcitrate dehydratasee; part of the gene cluster that mediates the biosynthesis of the antihypercholesterolemic agents phomoidrides which are dimeric anhydrides. Within the pathway, the alkylcitrate synthase (ACS) tstiJ and the alkylcitrate dehydratase (ACDH) tstI produce the decarboxylated monomeric anhydrides by coupling the C12-fatty acyl product from phiA with oxalacetic acid. The pathway begins with the highly reducing polyketide synthase tstA that catalyzes the formation of a C12-fatty acyl-ACP, starting from one acetate and 5 malonate units. The hydrolase tstM is involved in the release of the C12-fatty acyl chain from phiA. The alkylcitrate synthase (ACS) tstJ and the alkylcitrate dehydratase (ACDH) tstI then give rise to decarboxylated monomeric anhydrides by coupling the C12-fatty acyl chain with oxalacetic acid. The cyclase tstC is responsible for the dimerization of the monomeric anhydrides which leads to the production of prephomoidride that contains the characteristic bicyclo[4.3.1]deca-1,6-diene system of phomoidrides. Iterative oxidation catalyzed by the alpha-ketoglutarate-dependent dioxygenase tstK produced then phomoidride A. Finally, the methyltransferase tstE converts phomoidride A to phomoidride B via an acetalization reaction. The phosphatidylethanolamine-binding protein tstB and tstN are not essential for dimerization and their functions have still to be determined. This Talaromyces stipitatus (strain ATCC 10500 / CBS 375.48 / QM 6759 / NRRL 1006) (Penicillium stipitatum) protein is Alkylcitrate dehydratase phiI.